Consider the following 147-residue polypeptide: Lysozyme C, tracheal isozyme (147 aa).

The signal sequence occupies residues 1 to 18 (MKALLILGLLLLSVAVQG). Residues 19-147 (KTFKRCELAK…LTSYVKGCGV (129 aa)) enclose the C-type lysozyme domain. 4 cysteine pairs are disulfide-bonded: C24–C145, C48–C133, C83–C99, and C95–C113. Active-site residues include E53 and D71.

This sequence belongs to the glycosyl hydrolase 22 family. As to quaternary structure, monomer. Trachea.

The catalysed reaction is Hydrolysis of (1-&gt;4)-beta-linkages between N-acetylmuramic acid and N-acetyl-D-glucosamine residues in a peptidoglycan and between N-acetyl-D-glucosamine residues in chitodextrins.. Functionally, lysozymes have primarily a bacteriolytic function; those in tissues and body fluids are associated with the monocyte-macrophage system and enhance the activity of immunoagents. This Bos taurus (Bovine) protein is Lysozyme C, tracheal isozyme.